The following is a 390-amino-acid chain: Phosphoglycerate kinase (390 aa).

Substrate contacts are provided by residues 19–21 (DYN), arginine 34, 57–60 (HLGR), arginine 115, and arginine 148. Residues lysine 198, glycine 289, glutamate 320, and 347-350 (GGDS) each bind ATP.

It belongs to the phosphoglycerate kinase family. In terms of assembly, monomer.

It is found in the cytoplasm. It carries out the reaction (2R)-3-phosphoglycerate + ATP = (2R)-3-phospho-glyceroyl phosphate + ADP. It participates in carbohydrate degradation; glycolysis; pyruvate from D-glyceraldehyde 3-phosphate: step 2/5. This chain is Phosphoglycerate kinase, found in Thermus thermophilus (strain ATCC BAA-163 / DSM 7039 / HB27).